Consider the following 156-residue polypeptide: Oxidized purine nucleoside triphosphate hydrolase (156 aa).

The region spanning 3–132 (TSRLYTLVLV…WFPLLLQKKK (130 aa)) is the Nudix hydrolase domain. A 2-oxo-dATP-binding site is contributed by Thr8. Residue Lys23 coordinates 8-oxo-dGTP. 2-oxo-dATP is bound by residues Asn33 and 35–38 (FGGK). Mg(2+) contacts are provided by Gly36, Glu52, Glu55, Glu56, and Glu100. Residues 37-58 (GKVQEGETIEDGAKRELREESG) carry the Nudix box motif. 117 to 120 (WPDD) lines the 2-oxo-dATP pocket.

The protein belongs to the Nudix hydrolase family. In terms of assembly, monomer. Mg(2+) is required as a cofactor.

Its subcellular location is the cytoplasm. It is found in the nucleus. It localises to the nucleus membrane. The protein localises to the cytoplasmic vesicle. The protein resides in the secretory vesicle. Its subcellular location is the acrosome. It carries out the reaction 2-oxo-dATP + H2O = 2-oxo-dAMP + diphosphate + H(+). It catalyses the reaction 2-oxo-ATP + H2O = 2-oxo-AMP + diphosphate + H(+). The enzyme catalyses 8-oxo-dGTP + H2O = 8-oxo-dGMP + diphosphate + H(+). The catalysed reaction is 8-oxo-dATP + H2O = 8-oxo-dAMP + diphosphate + H(+). It carries out the reaction O(6)-methyl-dGTP + H2O = O(6)-methyl-dGMP + diphosphate + H(+). It catalyses the reaction N(6)-methyl-dATP + H2O = N(6)-methyl-dAMP + diphosphate + H(+). The enzyme catalyses N(6)-methyl-ATP + H2O = N(6)-methyl-AMP + diphosphate + H(+). Oxidized purine nucleoside triphosphate hydrolase which is a prominent sanitizer of the oxidized nucleotide pool. Catalyzes the hydrolysis of 2-oxo-dATP (2-hydroxy-dATP) into 2-oxo-dAMP. Also has a significant hydrolase activity toward 2-oxo-ATP, 8-oxo-dGTP and 8-oxo-dATP. Through the hydrolysis of oxidized purine nucleoside triphosphates, prevents their incorporation into DNA and the subsequent transversions A:T to C:G and G:C to T:A. Also catalyzes the hydrolysis of methylated purine nucleoside triphosphate preventing their integration into DNA. Through this antimutagenic activity protects cells from oxidative stress. The protein is Oxidized purine nucleoside triphosphate hydrolase (NUDT1) of Canis lupus familiaris (Dog).